The sequence spans 173 residues: Co-chaperone protein HscB homolog (173 aa).

Residues 5–77 (CHYALFDLQP…PRRARYLLAI (73 aa)) enclose the J domain.

Belongs to the HscB family. In terms of assembly, interacts with HscA and stimulates its ATPase activity.

Functionally, co-chaperone involved in the maturation of iron-sulfur cluster-containing proteins. Seems to help targeting proteins to be folded toward HscA. This chain is Co-chaperone protein HscB homolog, found in Pseudomonas putida (strain GB-1).